The primary structure comprises 280 residues: Probable endonuclease 4 (280 aa).

Residues His-69, His-109, Glu-145, Asp-179, His-182, His-216, Asp-229, His-231, and Glu-261 each coordinate Zn(2+).

This sequence belongs to the AP endonuclease 2 family. Requires Zn(2+) as cofactor.

It catalyses the reaction Endonucleolytic cleavage to 5'-phosphooligonucleotide end-products.. Functionally, endonuclease IV plays a role in DNA repair. It cleaves phosphodiester bonds at apurinic or apyrimidinic (AP) sites, generating a 3'-hydroxyl group and a 5'-terminal sugar phosphate. This is Probable endonuclease 4 from Pelodictyon phaeoclathratiforme (strain DSM 5477 / BU-1).